A 419-amino-acid polypeptide reads, in one-letter code: Isocitrate dehydrogenase [NADP] (419 aa).

Position 102 (threonine 102) interacts with NADP(+). Residues serine 111, asparagine 113, arginine 117, arginine 127, and arginine 151 each contribute to the D-threo-isocitrate site. Mg(2+) is bound at residue aspartate 306. NADP(+) is bound by residues 338–344 (HGSAPKY), asparagine 351, tyrosine 390, and arginine 394.

The protein belongs to the isocitrate and isopropylmalate dehydrogenases family. As to quaternary structure, homodimer. The cofactor is Mg(2+). Requires Mn(2+) as cofactor.

It carries out the reaction D-threo-isocitrate + NADP(+) = 2-oxoglutarate + CO2 + NADPH. Functionally, catalyzes the oxidative decarboxylation of isocitrate to 2-oxoglutarate and carbon dioxide with the concomitant reduction of NADP(+). The sequence is that of Isocitrate dehydrogenase [NADP] from Haloferax volcanii (strain ATCC 29605 / DSM 3757 / JCM 8879 / NBRC 14742 / NCIMB 2012 / VKM B-1768 / DS2) (Halobacterium volcanii).